The sequence spans 293 residues: Glycine--tRNA ligase alpha subunit (293 aa).

The protein belongs to the class-II aminoacyl-tRNA synthetase family. In terms of assembly, tetramer of two alpha and two beta subunits.

It localises to the cytoplasm. It carries out the reaction tRNA(Gly) + glycine + ATP = glycyl-tRNA(Gly) + AMP + diphosphate. In Prochlorococcus marinus (strain MIT 9211), this protein is Glycine--tRNA ligase alpha subunit.